The following is a 303-amino-acid chain: 4-hydroxy-tetrahydrodipicolinate synthase (303 aa).

T57 is a binding site for pyruvate. Y143 acts as the Proton donor/acceptor in catalysis. The active-site Schiff-base intermediate with substrate is K171. Position 211 (I211) interacts with pyruvate.

It belongs to the DapA family. In terms of assembly, homotetramer; dimer of dimers.

The protein localises to the cytoplasm. It carries out the reaction L-aspartate 4-semialdehyde + pyruvate = (2S,4S)-4-hydroxy-2,3,4,5-tetrahydrodipicolinate + H2O + H(+). It participates in amino-acid biosynthesis; L-lysine biosynthesis via DAP pathway; (S)-tetrahydrodipicolinate from L-aspartate: step 3/4. Functionally, catalyzes the condensation of (S)-aspartate-beta-semialdehyde [(S)-ASA] and pyruvate to 4-hydroxy-tetrahydrodipicolinate (HTPA). The protein is 4-hydroxy-tetrahydrodipicolinate synthase of Bifidobacterium animalis subsp. lactis (strain AD011).